The chain runs to 563 residues: Probable CoA ligase CCL11 (563 aa).

Residues Thr195–Lys203, His328–Thr333, Asp426, Ile438–Arg441, and Lys534 contribute to the ATP site. The segment at Asp263 to His328 is SBD1. Residues Gly329–Tyr405 are SBD2.

It belongs to the ATP-dependent AMP-binding enzyme family.

It is found in the cytoplasm. The protein localises to the cytosol. The protein is Probable CoA ligase CCL11 of Humulus lupulus (European hop).